Consider the following 193-residue polypeptide: Peptidyl-tRNA hydrolase (193 aa).

Tyr15 serves as a coordination point for tRNA. His20 serves as the catalytic Proton acceptor. 3 residues coordinate tRNA: Phe65, Asn67, and Asn113.

The protein belongs to the PTH family. In terms of assembly, monomer.

It localises to the cytoplasm. The catalysed reaction is an N-acyl-L-alpha-aminoacyl-tRNA + H2O = an N-acyl-L-amino acid + a tRNA + H(+). In terms of biological role, hydrolyzes ribosome-free peptidyl-tRNAs (with 1 or more amino acids incorporated), which drop off the ribosome during protein synthesis, or as a result of ribosome stalling. Its function is as follows. Catalyzes the release of premature peptidyl moieties from peptidyl-tRNA molecules trapped in stalled 50S ribosomal subunits, and thus maintains levels of free tRNAs and 50S ribosomes. The protein is Peptidyl-tRNA hydrolase of Ehrlichia ruminantium (strain Welgevonden).